Reading from the N-terminus, the 196-residue chain is Peptidyl-tRNA hydrolase (196 aa).

TRNA is bound at residue Tyr17. Residue His22 is the Proton acceptor of the active site. Positions 68, 70, and 116 each coordinate tRNA.

It belongs to the PTH family. As to quaternary structure, monomer.

The protein localises to the cytoplasm. The enzyme catalyses an N-acyl-L-alpha-aminoacyl-tRNA + H2O = an N-acyl-L-amino acid + a tRNA + H(+). Hydrolyzes ribosome-free peptidyl-tRNAs (with 1 or more amino acids incorporated), which drop off the ribosome during protein synthesis, or as a result of ribosome stalling. In terms of biological role, catalyzes the release of premature peptidyl moieties from peptidyl-tRNA molecules trapped in stalled 50S ribosomal subunits, and thus maintains levels of free tRNAs and 50S ribosomes. This chain is Peptidyl-tRNA hydrolase, found in Serratia proteamaculans (strain 568).